Consider the following 359-residue polypeptide: Alanine racemase (359 aa).

The active-site Proton acceptor; specific for D-alanine is Lys34. Lys34 is modified (N6-(pyridoxal phosphate)lysine). Arg129 contributes to the substrate binding site. Tyr256 functions as the Proton acceptor; specific for L-alanine in the catalytic mechanism. Met304 provides a ligand contact to substrate.

This sequence belongs to the alanine racemase family. Requires pyridoxal 5'-phosphate as cofactor.

It catalyses the reaction L-alanine = D-alanine. It participates in amino-acid biosynthesis; D-alanine biosynthesis; D-alanine from L-alanine: step 1/1. Its function is as follows. Catalyzes the interconversion of L-alanine and D-alanine. May also act on other amino acids. This chain is Alanine racemase (alr), found in Photobacterium profundum (strain SS9).